The primary structure comprises 90 residues: Probable Fe(2+)-trafficking protein (90 aa).

Belongs to the Fe(2+)-trafficking protein family.

Could be a mediator in iron transactions between iron acquisition and iron-requiring processes, such as synthesis and/or repair of Fe-S clusters in biosynthetic enzymes. This Laribacter hongkongensis (strain HLHK9) protein is Probable Fe(2+)-trafficking protein.